The primary structure comprises 346 residues: Phosphoribosylformylglycinamidine cyclo-ligase (346 aa).

It belongs to the AIR synthase family.

The protein localises to the cytoplasm. The enzyme catalyses 2-formamido-N(1)-(5-O-phospho-beta-D-ribosyl)acetamidine + ATP = 5-amino-1-(5-phospho-beta-D-ribosyl)imidazole + ADP + phosphate + H(+). Its pathway is purine metabolism; IMP biosynthesis via de novo pathway; 5-amino-1-(5-phospho-D-ribosyl)imidazole from N(2)-formyl-N(1)-(5-phospho-D-ribosyl)glycinamide: step 2/2. The sequence is that of Phosphoribosylformylglycinamidine cyclo-ligase from Bacillus anthracis (strain A0248).